We begin with the raw amino-acid sequence, 684 residues long: Beta-taxilin (684 aa).

Residues 1–26 (MEANHSEQLSAERQSTPPGDSSSLPS) show a composition bias toward polar residues. Residues 1–132 (MEANHSEQLS…KEPVSNKEQK (132 aa)) form a disordered region. Positions 45-64 (PEKEASVHPDISEELNRQLE) are enriched in basic and acidic residues. Acidic residues predominate over residues 93 to 107 (ESPDNEDGDCEETTE). Coiled-coil stretches lie at residues 135–351 (KKIL…VLKE) and 378–467 (NEVF…SEKD). Over residues 458–475 (IRDAEISEKDDQSQHNSD) the composition is skewed to basic and acidic residues. Disordered regions lie at residues 458 to 485 (IRDA…VSVD), 514 to 632 (ESTP…DVPA), and 646 to 684 (PACE…EGVD). Phosphoserine occurs at positions 474 and 483. Basic and acidic residues predominate over residues 514–524 (ESTPHQSKETQ). A compositionally biased stretch (polar residues) spans 613 to 622 (QAPQAPTEAS).

Belongs to the taxilin family. Binds to the C-terminal coiled coil region of syntaxin family members STX1A, STX3A and STX4A. Has a preference for STX1A. Expressed in skeletal muscle.

In terms of biological role, promotes motor nerve regeneration. May be involved in intracellular vesicle traffic. This Homo sapiens (Human) protein is Beta-taxilin (TXLNB).